The sequence spans 1360 residues: S-layer protein A (1360 aa).

The first 24 residues, 1–24, serve as a signal peptide directing secretion; the sequence is MNKSAIRYLSLLLVFLMGGSFLAG.

This sequence belongs to the Sulfolobales SlaA family. The mushroom-shaped unit cells of the Sulfolobales' S-layers may consist of three SlaB subunits and six SlaA subunits.

The protein localises to the secreted. It is found in the cell wall. It localises to the S-layer. In terms of biological role, S-layer large protein. May form the highly ordered outer sheath. The protein is S-layer protein A of Metallosphaera sedula (strain ATCC 51363 / DSM 5348 / JCM 9185 / NBRC 15509 / TH2).